A 361-amino-acid chain; its full sequence is Peptide chain release factor 1 (361 aa).

Residue glutamine 236 is modified to N5-methylglutamine.

It belongs to the prokaryotic/mitochondrial release factor family. In terms of processing, methylated by PrmC. Methylation increases the termination efficiency of RF1.

The protein localises to the cytoplasm. Peptide chain release factor 1 directs the termination of translation in response to the peptide chain termination codons UAG and UAA. The polypeptide is Peptide chain release factor 1 (Levilactobacillus brevis (strain ATCC 367 / BCRC 12310 / CIP 105137 / JCM 1170 / LMG 11437 / NCIMB 947 / NCTC 947) (Lactobacillus brevis)).